The sequence spans 907 residues: Leucine-rich repeat-containing G-protein coupled receptor 5 (907 aa).

Residues 1–21 (MDTSSVGVLLSLPVLLQLAAG) form the signal peptide. Residues 22 to 553 (GGSPRPGTLL…SPGPFKLCEY (532 aa)) lie on the Extracellular side of the membrane. In terms of domain architecture, LRRNT spans 33-64 (GCPAHCQCEPDGRMLLRVDCSDLGLSELPSNL). 2 cysteine pairs are disulfide-bonded: Cys34–Cys40 and Cys38–Cys52. LRR repeat units follow at residues 44-64 (GRML…PSNL), 65-88 (SVFT…PLHS), 89-112 (LRFL…AFAG), 114-136 (YSLK…ALQN), 137-160 (LRSL…CFSG), 162-184 (HSLR…AFRS), 185-208 (LSAL…AFGN), 209-232 (LSSL…CFDG), 233-256 (LHSL…VRTL), 257-279 (SNLK…AFVG), 281-303 (PSLI…AFQH), 304-327 (LPEL…LTGT), 328-350 (ASLE…VCDQ), 351-375 (LPNL…VCQK), 377-396 (QKID…TFQQ), 397-420 (LFSL…AFST), and 421-444 (LPSL…GLHG). N-linked (GlcNAc...) asparagine glycosylation is found at Asn63 and Asn77. The N-linked (GlcNAc...) asparagine glycan is linked to Asn208. A disulfide bridge links Cys348 with Cys373. A disulfide bridge connects residues Cys479 and Cys541. The N-linked (GlcNAc...) asparagine glycan is linked to Asn500. The helical transmembrane segment at 554 to 574 (LFGSWLIRIGVWTIAVLALTC) threads the bilayer. Residues 564–585 (VWTIAVLALTCNALVTSTVFRA) form an LRR 18 repeat. Residues 575-593 (NALVTSTVFRAAVYISSIK) are Cytoplasmic-facing. Residues 594–614 (LLIGLIAAVNMLMGVSSAVLA) form a helical membrane-spanning segment. Residues 615-638 (GVDAFTFGSFAQHGAWWEQAVGCQ) lie on the Extracellular side of the membrane. A disulfide bridge connects residues Cys637 and Cys712. A helical membrane pass occupies residues 639 to 659 (VVGFLSIFASESSVFLLTLAA). The Cytoplasmic portion of the chain corresponds to 660-682 (LERGWSVKCSAKFETQTPFPSLR). A helical transmembrane segment spans residues 683-703 (ATLALCALLAGTVAAVPLLGG). Residues 704–723 (SEYSASPLCLPLPFGEPRAT) are Extracellular-facing. The helical transmembrane segment at 724-744 (GYMVALVLLNSLCFLVMTVAY) threads the bilayer. Topologically, residues 745–767 (TRLYCHLEKGDLESMWDCSMVKH) are cytoplasmic. The helical transmembrane segment at 768–788 (VALLLFTNCILHCPVAFLSFS) threads the bilayer. Topologically, residues 789-802 (SLLNLTFISPEVIK) are extracellular. Asn792 is a glycosylation site (N-linked (GlcNAc...) asparagine). Residues 803 to 823 (FILLVIVPLPACLNPLLYILF) traverse the membrane as a helical segment. The Cytoplasmic portion of the chain corresponds to 824 to 907 (NPHFKEDLGS…LSSVAFVPCL (84 aa)).

This sequence belongs to the G-protein coupled receptor 1 family. In terms of assembly, identified in a complex composed of RNF43, LGR5 and RSPO1. Also interacts with other R-spondin ligands, including RSPO2, RSPO3 and RSPO4.

The protein localises to the cell membrane. It is found in the golgi apparatus. The protein resides in the trans-Golgi network membrane. Its function is as follows. Receptor for R-spondins that potentiates the canonical Wnt signaling pathway and acts as a stem cell marker of the intestinal epithelium and the hair follicle. Upon binding to R-spondins (RSPO1, RSPO2, RSPO3 or RSPO4), associates with phosphorylated LRP6 and frizzled receptors that are activated by extracellular Wnt receptors, triggering the canonical Wnt signaling pathway to increase expression of target genes. In contrast to classical G-protein coupled receptors, does not activate heterotrimeric G-proteins to transduce the signal. Involved in the development and/or maintenance of the adult intestinal stem cells during postembryonic development. The protein is Leucine-rich repeat-containing G-protein coupled receptor 5 (LGR5) of Bos taurus (Bovine).